We begin with the raw amino-acid sequence, 247 residues long: Protein GrpE (247 aa).

Disordered stretches follow at residues Met-1–Asp-64 and Ser-214–Asp-247. 3 stretches are compositionally biased toward polar residues: residues Asp-30–Glu-39, Asp-49–Leu-63, and Thr-228–Gln-241.

The protein belongs to the GrpE family. As to quaternary structure, homodimer.

Its subcellular location is the cytoplasm. Functionally, participates actively in the response to hyperosmotic and heat shock by preventing the aggregation of stress-denatured proteins, in association with DnaK and GrpE. It is the nucleotide exchange factor for DnaK and may function as a thermosensor. Unfolded proteins bind initially to DnaJ; upon interaction with the DnaJ-bound protein, DnaK hydrolyzes its bound ATP, resulting in the formation of a stable complex. GrpE releases ADP from DnaK; ATP binding to DnaK triggers the release of the substrate protein, thus completing the reaction cycle. Several rounds of ATP-dependent interactions between DnaJ, DnaK and GrpE are required for fully efficient folding. The chain is Protein GrpE from Prochlorococcus marinus (strain MIT 9211).